Reading from the N-terminus, the 338-residue chain is Ketol-acid reductoisomerase (NADP(+)) (338 aa).

Residues M1–T181 enclose the KARI N-terminal Rossmann domain. NADP(+)-binding positions include Y24–Q27, R47, and S52. Residue H107 is part of the active site. Residue G133 coordinates NADP(+). Residues N182–I327 enclose the KARI C-terminal knotted domain. Residues D190, E194, E226, and E230 each contribute to the Mg(2+) site. Residue S251 participates in substrate binding.

The protein belongs to the ketol-acid reductoisomerase family. The cofactor is Mg(2+).

The catalysed reaction is (2R)-2,3-dihydroxy-3-methylbutanoate + NADP(+) = (2S)-2-acetolactate + NADPH + H(+). It catalyses the reaction (2R,3R)-2,3-dihydroxy-3-methylpentanoate + NADP(+) = (S)-2-ethyl-2-hydroxy-3-oxobutanoate + NADPH + H(+). It functions in the pathway amino-acid biosynthesis; L-isoleucine biosynthesis; L-isoleucine from 2-oxobutanoate: step 2/4. Its pathway is amino-acid biosynthesis; L-valine biosynthesis; L-valine from pyruvate: step 2/4. Its function is as follows. Involved in the biosynthesis of branched-chain amino acids (BCAA). Catalyzes an alkyl-migration followed by a ketol-acid reduction of (S)-2-acetolactate (S2AL) to yield (R)-2,3-dihydroxy-isovalerate. In the isomerase reaction, S2AL is rearranged via a Mg-dependent methyl migration to produce 3-hydroxy-3-methyl-2-ketobutyrate (HMKB). In the reductase reaction, this 2-ketoacid undergoes a metal-dependent reduction by NADPH to yield (R)-2,3-dihydroxy-isovalerate. The chain is Ketol-acid reductoisomerase (NADP(+)) from Burkholderia thailandensis (strain ATCC 700388 / DSM 13276 / CCUG 48851 / CIP 106301 / E264).